The primary structure comprises 1357 residues: DNA-directed RNA polymerase subunit beta (1357 aa).

The protein belongs to the RNA polymerase beta chain family. The RNAP catalytic core consists of 2 alpha, 1 beta, 1 beta' and 1 omega subunit. When a sigma factor is associated with the core the holoenzyme is formed, which can initiate transcription.

The enzyme catalyses RNA(n) + a ribonucleoside 5'-triphosphate = RNA(n+1) + diphosphate. Its function is as follows. DNA-dependent RNA polymerase catalyzes the transcription of DNA into RNA using the four ribonucleoside triphosphates as substrates. In Pseudomonas syringae pv. tomato (strain ATCC BAA-871 / DC3000), this protein is DNA-directed RNA polymerase subunit beta.